We begin with the raw amino-acid sequence, 266 residues long: Norfluorocurarine synthase 2 (266 aa).

One can recognise an AB hydrolase-1 domain in the interval 11–121; that stretch reads HFVLVHGAGH…IMPDSTHPPI (111 aa). Catalysis depends on residues S86, D216, and H244.

It belongs to the AB hydrolase superfamily. As to quaternary structure, homodimer. Mainly expressed in roots.

It carries out the reaction 17-dehydropreakuammicine + H2O = norfluorocurarine + methanol + CO2. The protein operates within alkaloid biosynthesis. Hydrolase involved in the biosynthesis of curare monoterpene indole alkaloids (MIAs), natural products such as strychnine, a neurotoxic compound used as a pesticide to control rodents, and its pharmacologically active derivatives, including brucine, used to regulate blood pressure. Curare alkaloids act as animal glycine receptor antagonists. Catalyzes the conversion of dehydropreakuammicine to norfluorocurarine. The protein is Norfluorocurarine synthase 2 of Strychnos nux-vomica (Poison nut).